Reading from the N-terminus, the 379-residue chain is Gap junction alpha-1 protein (379 aa).

The Cytoplasmic portion of the chain corresponds to 2-23 (GDWSALGRLLDKVQAYSTAGGK). A helical transmembrane segment spans residues 24-44 (VWLSVLFIFRILLLGTAVESA). Residues 45-76 (WGDEQSAFVCNTQQPGCENVCYDKSFPISHVR) are Extracellular-facing. Intrachain disulfides connect cysteine 54-cysteine 192 and cysteine 187-cysteine 198. A helical transmembrane segment spans residues 77–97 (FWVLQIIFVSTPTLLYLAHVF). The Cytoplasmic portion of the chain corresponds to 98–163 (YLMRKEEKLN…TYIISILFKS (66 aa)). Residues 164–184 (VFEVGFIIIQWYMYGFSLSAI) form a helical membrane-spanning segment. Over 185 to 207 (YTCKRDPCPHQVDCFLSRPTEKT) the chain is Extracellular. The chain crosses the membrane as a helical span at residues 208–228 (IFIWFMLIVSIVSLALNIIEL). Residues 229–379 (FYVTYKSIKD…SRPRPDDLEI (151 aa)) are Cytoplasmic-facing. Residues 322–379 (STISNTHAQPFDFSDEHQNTKKMAPGHEMQPLTILDQRPSSRASSHASSRPRPDDLEI) form a disordered region. Residues 359–371 (RPSSRASSHASSR) are compositionally biased toward low complexity.

It belongs to the connexin family. Alpha-type (group II) subfamily. As to quaternary structure, a connexon is composed of a hexamer of connexins. Interacts with TMEM65. In terms of tissue distribution, expressed in most tissues. Highest levels found in eye and brain.

The protein localises to the cell membrane. The protein resides in the cell junction. Its subcellular location is the gap junction. Functionally, one gap junction consists of a cluster of closely packed pairs of transmembrane channels, the connexons, through which materials of low MW diffuse from one cell to a neighboring cell. Plays an essential role in gap junction communication in the ventricles. In Xenopus laevis (African clawed frog), this protein is Gap junction alpha-1 protein (gja1).